The chain runs to 527 residues: Heat shock factor protein HSF8 (527 aa).

The DNA-binding element occupies 39–133; the sequence is PFLVKTYDMV…KSISRRKPAH (95 aa). Disordered regions lie at residues 128–158, 241–273, and 297–341; these read RRKP…HSAS, NESN…ADGQ, and SSPR…TSGK. Low complexity predominate over residues 134–152; sequence GHAQQQQQPHGNAQQQMQP. Over residues 317–326 the composition is skewed to polar residues; it reads SPQSNASSGR.

The protein belongs to the HSF family. As to quaternary structure, homotrimer. Exhibits temperature-dependent phosphorylation.

It is found in the nucleus. Functionally, DNA-binding protein that specifically binds heat shock promoter elements (HSE) and activates transcription. In Solanum lycopersicum (Tomato), this protein is Heat shock factor protein HSF8 (HSF8).